The chain runs to 31 residues: Cytochrome b6-f complex subunit 6 (31 aa).

Residues 4-24 (ITSYFGFLLVVLTITSALFIG) form a helical membrane-spanning segment.

The protein belongs to the PetL family. The 4 large subunits of the cytochrome b6-f complex are cytochrome b6, subunit IV (17 kDa polypeptide, PetD), cytochrome f and the Rieske protein, while the 4 small subunits are PetG, PetL, PetM and PetN. The complex functions as a dimer.

Its subcellular location is the plastid. It localises to the chloroplast thylakoid membrane. Functionally, component of the cytochrome b6-f complex, which mediates electron transfer between photosystem II (PSII) and photosystem I (PSI), cyclic electron flow around PSI, and state transitions. PetL is important for photoautotrophic growth as well as for electron transfer efficiency and stability of the cytochrome b6-f complex. This chain is Cytochrome b6-f complex subunit 6, found in Jasminum nudiflorum (Winter jasmine).